A 464-amino-acid polypeptide reads, in one-letter code: tRNA-2-methylthio-N(6)-dimethylallyladenosine synthase (464 aa).

Residues 19 to 135 (GSYWITTFGC…LENLLGKVDL (117 aa)) enclose the MTTase N-terminal domain. 6 residues coordinate [4Fe-4S] cluster: C28, C64, C98, C170, C174, and C177. One can recognise a Radical SAM core domain in the interval 156 to 393 (RESSICGWVN…NELVETTSKQ (238 aa)). A TRAM domain is found at 396 to 464 (ERYLDSIESV…PFSLTGILCL (69 aa)).

It belongs to the methylthiotransferase family. MiaB subfamily. Monomer. Requires [4Fe-4S] cluster as cofactor.

Its subcellular location is the cytoplasm. The catalysed reaction is N(6)-dimethylallyladenosine(37) in tRNA + (sulfur carrier)-SH + AH2 + 2 S-adenosyl-L-methionine = 2-methylsulfanyl-N(6)-dimethylallyladenosine(37) in tRNA + (sulfur carrier)-H + 5'-deoxyadenosine + L-methionine + A + S-adenosyl-L-homocysteine + 2 H(+). Its function is as follows. Catalyzes the methylthiolation of N6-(dimethylallyl)adenosine (i(6)A), leading to the formation of 2-methylthio-N6-(dimethylallyl)adenosine (ms(2)i(6)A) at position 37 in tRNAs that read codons beginning with uridine. The polypeptide is tRNA-2-methylthio-N(6)-dimethylallyladenosine synthase (Prochlorococcus marinus (strain MIT 9215)).